An 870-amino-acid chain; its full sequence is MEIGVSVAECKSVPGITSTPHSKDHSSPFYSPSHNGLLTDHHESLDNDVAREIQYLDEVLEANCCDSSVDGTYNGISSPEPGAAILVSSLGSPAHSATKVEPIEKASGRQLPPHIELSRSPSDSMAEGERANGHSTDQPQDMLGNSLQAPASPSSSTSSHCSSRDGEFTLTTLKKEAKFELRAFHEDKKPSKLFEEDEHEKEQFCIRKVRPSEEMIELEKERRELIRSQAVKKNPGIAAKWWNPPQKKTIEEQLDEEHLESHRKYKERKEKRAQQEQLQLQQQQQQQLQQLQQLQQQQQQQLSTSQLCTAPAAHEHLDSIEHTKEDVVTEQIDFSAARKQFQQMENSRQTLAKGQSTPRLFSIKPFYKPLGSINSDKPPTILRPATIGGTVEDSSTQAAKEQKALCVSESQSAGAGTGNAATQGKEGPYSEPSKRGPLSKLWAEDGEFTSARAVLTVVKDEDHGILDQFSRSVNVSLTQEELDSGLDELSVRSQDTTVLETLSNDFSMDNISDSGASNETPNALQENSLADFSLPQTPQTDNPSEGREGVSKSFSDHGFYSPSSTLGDSPSVDDPLEYQAGLLVQNAIQQAIAEQVDKAEVHTSKEGSEQQEPGAMVEEAGSQAPGSEKPQGMFAPPQVSSPVQEKRDVLPKILPGEDKTLREKGPSQPPTAVQPSGPVNMKETRPEGGYFSKYSEAAELRSTASLLATQESDVMVGPFKLRSRKQRTLSMIEEEIRAAQEREEELKRQRQVRQSTPSPRAQNAPSLPSRTTCYKTAPGKIEKVKPPPSPTTEGPSLQPDLAPEEAAGAQRPKNLMQTLMEDYETHKSKRRERMDDSSVLEATRVNRRKSALALRWEAGIYANQEEEDNE.

Disordered stretches follow at residues 14–43 (PGIT…DHHE) and 103–165 (IEKA…SSRD). Ser-122 carries the phosphoserine modification. The segment covering 133 to 151 (GHSTDQPQDMLGNSLQAPA) has biased composition (polar residues). Position 152 is a phosphoserine (Ser-152). Residues 152-161 (SPSSSTSSHC) show a composition bias toward low complexity. Lys-174 participates in a covalent cross-link: Glycyl lysine isopeptide (Lys-Gly) (interchain with G-Cter in SUMO1); alternate. Residue Lys-174 forms a Glycyl lysine isopeptide (Lys-Gly) (interchain with G-Cter in SUMO2); alternate linkage. Residues 213–307 (EEMIELEKER…QQQQLSTSQL (95 aa)) adopt a coiled-coil conformation. Positions 233 to 324 (KNPGIAAKWW…EHLDSIEHTK (92 aa)) are disordered. A compositionally biased stretch (basic and acidic residues) spans 259-274 (LESHRKYKERKEKRAQ). Low complexity predominate over residues 275–302 (QEQLQLQQQQQQQLQQLQQLQQQQQQQL). The span at 313–324 (AHEHLDSIEHTK) shows a compositional bias: basic and acidic residues. At Ser-347 the chain carries Phosphoserine. Residues 409 to 436 (ESQSAGAGTGNAATQGKEGPYSEPSKRG) are disordered. Residues 410 to 424 (SQSAGAGTGNAATQG) show a composition bias toward low complexity. Ser-472, Ser-476, and Ser-528 each carry phosphoserine. Residues 506 to 543 (FSMDNISDSGASNETPNALQENSLADFSLPQTPQTDNP) show a composition bias toward polar residues. Disordered stretches follow at residues 506–577 (FSMD…DPLE) and 595–688 (QVDK…RPEG). Phosphothreonine is present on Thr-537. Residues 576–589 (LEYQAGLLVQNAIQ) form a PKA-RII subunit binding domain region. A compositionally biased stretch (basic and acidic residues) spans 595-608 (QVDKAEVHTSKEGS). A Phosphoserine modification is found at Ser-641. Basic and acidic residues predominate over residues 644 to 665 (QEKRDVLPKILPGEDKTLREKG). Positions 720-755 (KLRSRKQRTLSMIEEEIRAAQEREEELKRQRQVRQS) form a coiled coil. Phosphoserine occurs at positions 730, 758, 789, and 796. The segment at 740–814 (QEREEELKRQ…EAAGAQRPKN (75 aa)) is disordered. A compositionally biased stretch (polar residues) spans 755 to 774 (STPSPRAQNAPSLPSRTTCY).

The protein resides in the apical cell membrane. Binds to regulatory subunit (RII) of protein kinase A. May be involved in establishing polarity in signaling systems or in integrating PKA-RII isoforms with downstream effectors to capture, amplify and focus diffuse, trans-cellular signals carried by cAMP. Binds to and modulates the structure of the actin cytoskeleton. This is A-kinase anchor protein 2 from Rattus norvegicus (Rat).